Reading from the N-terminus, the 185-residue chain is C-phycoerythrin beta chain (185 aa).

(2R,3E)-phycoerythrobilin contacts are provided by C49 and C60. An N4-methylasparagine modification is found at N71. The (2R,3E)-phycoerythrobilin site is built by C81 and C166.

Belongs to the phycobiliprotein family. As to quaternary structure, heterodimer of an alpha and a beta chain. Contains three covalently linked bilin chromophores.

It is found in the cellular thylakoid membrane. Functionally, light-harvesting photosynthetic bile pigment-protein from the phycobiliprotein complex. The sequence is that of C-phycoerythrin beta chain (cpeB) from Pseudanabaena tenuis (strain PCC 7409).